A 1012-amino-acid chain; its full sequence is Translation initiation factor IF-2, chloroplastic (1012 aa).

Positions 75–102 are enriched in low complexity; it reads GNSVSLDSNSNSSSSSKSGGDDGTGFVL. Disordered stretches follow at residues 75 to 132, 147 to 294, and 319 to 340; these read GNSV…VEER, EKLG…KEKK, and APPK…RKKG. The segment covering 152-175 has biased composition (polar residues); sequence SKVNGDKNNGSVNKPVRNNANASP. Positions 183 to 194 are enriched in low complexity; sequence SAASLKSKTLKS. A compositionally biased stretch (basic and acidic residues) spans 208–231; it reads VVKEVPKPSYNKNEEEKSQTRGGE. The span at 240 to 257 shows a compositional bias: pro residues; the sequence is PQPPSKPQPLKPQQPSKP. Basic and acidic residues predominate over residues 277-294; it reads VLRDKGAAETSVKSKEKK. The tr-type G domain occupies 488–661; sequence DRPPVITIMG…MLVAELQELK (174 aa). Positions 497–504 are G1; that stretch reads GHVDHGKT. 497-504 contributes to the GTP binding site; the sequence is GHVDHGKT. Residues 522-526 form a G2 region; sequence GITQG. Residues 547–550 are G3; sequence DTPG. GTP contacts are provided by residues 547-551 and 601-604; these read DTPGH and NKID. The G4 stretch occupies residues 601–604; sequence NKID. The G5 stretch occupies residues 637 to 639; it reads SAL.

The protein belongs to the TRAFAC class translation factor GTPase superfamily. Classic translation factor GTPase family. IF-2 subfamily.

Its subcellular location is the plastid. The protein localises to the chloroplast. One of the essential components for the initiation of protein synthesis. Protects formylmethionyl-tRNA from spontaneous hydrolysis and promotes its binding to the 30S ribosomal subunits. Also involved in the hydrolysis of GTP during the formation of the 70S ribosomal complex. The protein is Translation initiation factor IF-2, chloroplastic (IF2CP) of Phaseolus vulgaris (Kidney bean).